A 377-amino-acid polypeptide reads, in one-letter code: Ribosomal RNA large subunit methyltransferase G (377 aa).

It belongs to the methyltransferase superfamily. RlmG family.

It localises to the cytoplasm. It carries out the reaction guanosine(1835) in 23S rRNA + S-adenosyl-L-methionine = N(2)-methylguanosine(1835) in 23S rRNA + S-adenosyl-L-homocysteine + H(+). Its function is as follows. Specifically methylates the guanine in position 1835 (m2G1835) of 23S rRNA. The protein is Ribosomal RNA large subunit methyltransferase G of Shewanella sp. (strain ANA-3).